Consider the following 423-residue polypeptide: UDP-N-acetylglucosamine 1-carboxyvinyltransferase (423 aa).

22–23 (KN) contributes to the phosphoenolpyruvate binding site. Residue Arg-93 participates in UDP-N-acetyl-alpha-D-glucosamine binding. Catalysis depends on Cys-117, which acts as the Proton donor. At Cys-117 the chain carries 2-(S-cysteinyl)pyruvic acid O-phosphothioketal. Residues 122–126 (RPVDL), Asp-308, and Ile-330 each bind UDP-N-acetyl-alpha-D-glucosamine.

Belongs to the EPSP synthase family. MurA subfamily.

The protein localises to the cytoplasm. The catalysed reaction is phosphoenolpyruvate + UDP-N-acetyl-alpha-D-glucosamine = UDP-N-acetyl-3-O-(1-carboxyvinyl)-alpha-D-glucosamine + phosphate. Its pathway is cell wall biogenesis; peptidoglycan biosynthesis. In terms of biological role, cell wall formation. Adds enolpyruvyl to UDP-N-acetylglucosamine. The protein is UDP-N-acetylglucosamine 1-carboxyvinyltransferase of Maricaulis maris (strain MCS10) (Caulobacter maris).